A 55-amino-acid chain; its full sequence is UPF0434 protein BPEN_388 (55 aa).

Belongs to the UPF0434 family.

The sequence is that of UPF0434 protein BPEN_388 from Blochmanniella pennsylvanica (strain BPEN).